The following is a 2313-amino-acid chain: Histone-lysine N-methyltransferase Set2 (2313 aa).

Disordered stretches follow at residues 1–115 (MEES…ASTS), 179–442 (AVGG…EETF), 550–858 (EPPL…LKAK), 883–1106 (RLDE…KKAL), 1118–1150 (ETES…PFGD), and 1163–1251 (KRDK…SQGR). A DNA-binding region (a.T hook 1) is located at residues 17-29 (GRGRGRPPKVALS). Residues 73–82 (IKFDVRDLLN) are compositionally biased toward basic and acidic residues. Low complexity predominate over residues 101 to 115 (STGHSQSGTTAASTS). Positions 197 to 209 (PRKRGRPRKSQLA) form a DNA-binding region, a.T hook 2. A compositionally biased stretch (low complexity) spans 221–241 (SCSDSDTNSTSTTTSNMSSDS). Positions 252–265 (PKSKLRVSLKRLKL) are enriched in basic residues. Positions 266–288 (GGRLESSDSGNSPSSSSPEVEPP) are enriched in low complexity. Basic and acidic residues predominate over residues 330–345 (ESPKGEEEQEEGRPVE). Acidic residues-rich tracts occupy residues 347-356 (EPQDLIDIDM), 365-375 (PDPEEDLDEIM), and 388-398 (ADDEAEEEEDA). T404 bears the Phosphothreonine mark. Over residues 412-433 (ADSCSSAPRRSRRSAPLSGSSR) the composition is skewed to low complexity. Positions 552-563 (PLKDESDPKQTE) are enriched in basic and acidic residues. Over residues 659 to 671 (EDYESNQEQVAED) the composition is skewed to acidic residues. A compositionally biased stretch (polar residues) spans 676–685 (CNNQKGQKQT). 4 stretches are compositionally biased toward basic and acidic residues: residues 689 to 708 (EMKE…EKAM), 719 to 732 (VDKK…EKKV), 740 to 749 (VPEKKMDSKK), and 758 to 782 (KQKE…KSSA). S786 and S788 each carry phosphoserine. 3 stretches are compositionally biased toward polar residues: residues 800-833 (AQWS…SNQP), 918-928 (KSLSGKTSLRR), and 938-955 (LERN…NTSA). Residues 959–969 (KPSKVKKKINP) are compositionally biased toward basic residues. A compositionally biased stretch (low complexity) spans 997 to 1010 (SSPVSTSSDSSSKR). Basic and acidic residues predominate over residues 1016–1039 (TTSDLDGGSKLDQRRYTICEDRQP). 2 stretches are compositionally biased toward low complexity: residues 1085 to 1097 (SRQN…SSAS) and 1118 to 1127 (ETESSESTSS). The span at 1163–1183 (KRDKVDEDQRKEGQDEVKREA) shows a compositional bias: basic and acidic residues. Low complexity predominate over residues 1199 to 1213 (TPATTPTPSPTQSNP). The 54-residue stretch at 1307–1360 (NAEMQCDCFLTGDEEAQGHLSCGAGCINRMLMIECGPLCSNGARCTNKRFQQHQ) folds into the AWS domain. Residues C1312, C1314, C1328, C1332, C1341, C1345, and C1351 each coordinate Zn(2+). The region spanning 1362 to 1479 (WPCRVFRTEK…PGEEITFDYQ (118 aa)) is the SET domain. S-adenosyl-L-methionine is bound by residues 1415 to 1417 (HYY) and 1440 to 1441 (NH). C1443 contributes to the Zn(2+) binding site. Residues 1486 to 1502 (DAQRCYCEAANCRGWIG) form the Post-SET domain. Q1488 provides a ligand contact to S-adenosyl-L-methionine. Residue C1490 participates in Zn(2+) binding. Residue Y1491 participates in S-adenosyl-L-methionine binding. Residues C1492 and C1497 each contribute to the Zn(2+) site. Disordered regions lie at residues 1501–1598 (IGGE…KPKV) and 1763–1860 (MKEH…RRTL). Residues 1505 to 1534 (PDSDEGEQLDEESDSDAEMDEEELEAEPEE) are compositionally biased toward acidic residues. Residues 1539–1551 (KSAKAKAKSKLKA) are compositionally biased toward basic residues. 3 stretches are compositionally biased toward basic and acidic residues: residues 1564 to 1574 (QTKPKDREYKA), 1763 to 1774 (MKEHEREADRQQ), and 1784 to 1806 (EDQR…RDTT). Polar residues predominate over residues 1817 to 1832 (SGNNTICTITTQQKGS). Basic and acidic residues predominate over residues 1840-1860 (TRNDNRRRSDIGPPSEQRRTL). Residues 1963–1996 (DPLPPAWNWQVTSDGDIYYYNLRERISQWEPPSP) form the WW domain. Residues S2130 and S2131 each carry the phosphoserine modification. The segment at 2177 to 2218 (LGTVGKRKLPMPPSVTVKKHRQEQRSKKVKSSQSPLTATSAR) is disordered. Basic residues predominate over residues 2193–2206 (VKKHRQEQRSKKVK). A compositionally biased stretch (polar residues) spans 2207–2216 (SSQSPLTATS).

Belongs to the class V-like SAM-binding methyltransferase superfamily. Histone-lysine methyltransferase family. SET2 subfamily. Interacts with (phosphorylated) Polr2A.

It localises to the nucleus. Its subcellular location is the chromosome. The enzyme catalyses L-lysyl(36)-[histone H3] + 3 S-adenosyl-L-methionine = N(6),N(6),N(6)-trimethyl-L-lysyl(36)-[histone H3] + 3 S-adenosyl-L-homocysteine + 3 H(+). Histone methyltransferase that specifically trimethylates 'Lys-36' of histone H3 (H3K36me3). Represents the main enzyme generating H3K36me3, a specific tag for epigenetic transcriptional activation. Involved in dosage compensation in males (X chromosome dosage compensation) by mediating formation of H3K36me3, a mark recognized by msl-3 component of the MSL complex. In addition to its role in dosage compensation in males, promotes germline stem cell differentiation in females: catalyzes formation of H3K36me3, promoting recruitment of msl-3 and subsequent recruitment of the ATAC complex, leading to transcription of genes, such as RpS19b. This is Histone-lysine N-methyltransferase Set2 from Drosophila melanogaster (Fruit fly).